Reading from the N-terminus, the 300-residue chain is 7-methylguanosine phosphate-specific 5'-nucleotidase (300 aa).

Asp-41 acts as the Nucleophile in catalysis. 2 residues coordinate Mg(2+): Asp-41 and Asp-43. The active-site Proton donor is Asp-43. Residue Glu-88 participates in CMP binding. Residue Glu-88 coordinates N(7)-methyl-GMP. Substrate is bound by residues 156-157 (SA) and Lys-205. Asp-230 provides a ligand contact to Mg(2+). Lys-256 carries the N6-acetyllysine modification.

It belongs to the pyrimidine 5'-nucleotidase family. In terms of assembly, monomer.

The protein resides in the cytoplasm. It catalyses the reaction N(7)-methyl-GMP + H2O = N(7)-methylguanosine + phosphate. The catalysed reaction is CMP + H2O = cytidine + phosphate. The enzyme catalyses a ribonucleoside 5'-phosphate + H2O = a ribonucleoside + phosphate. Functionally, specifically hydrolyzes 7-methylguanosine monophosphate (m(7)GMP) to 7-methylguanosine and inorganic phosphate. The specific activity for m(7)GMP may protect cells against undesired salvage of m(7)GMP and its incorporation into nucleic acids. Also has weak activity for CMP. UMP and purine nucleotides are poor substrates. The protein is 7-methylguanosine phosphate-specific 5'-nucleotidase (NT5C3B) of Homo sapiens (Human).